Here is a 798-residue protein sequence, read N- to C-terminus: Cold shock domain-containing protein E1 (798 aa).

The residue at position 1 (M1) is an N-acetylmethionine. Residues 26–87 (ETGVIEKLLT…RTGKPIAVKL (62 aa)) form the CSD 1 domain. K81 is subject to N6-acetyllysine. A Glycyl lysine isopeptide (Lys-Gly) (interchain with G-Cter in SUMO2) cross-link involves residue K91. S123 is subject to Phosphoserine. The region spanning 136 to 179 (VFYLTYTPEDVEGNVQLETGDKINFVIDNNKHTGAVSARNIMLL) is the CSD 2; truncated domain. The CSD 3 domain occupies 186–245 (CQGVVCAMKEAFGFIERGDVVKEIFFHYSEFKGDLETLQPGDDVEFTIKDRNGKEVATDV). S276 carries the post-translational modification Phosphoserine. A CSD 4; truncated domain is found at 297–337 (LPFGDKDTKSKVTLLEGDHVRFNISTDRRDKLERATNIEVL). 2 consecutive CSD domains span residues 349-410 (EMGV…AIRI) and 447-507 (NKGK…ATCV). S514 is subject to Phosphoserine. The CSD 7 domain occupies 519-579 (LLGYVATLKD…KGNKVSAEKV (61 aa)). The residue at position 584 (S584) is a Phosphoserine. 2 consecutive CSD domains span residues 610 to 670 (PTQT…AYNI) and 674 to 735 (RRAT…ACNV). The 42-residue stretch at 748-789 (PRPDRLVNRLKNITLDDASAPRLMVLRQPRGPDNSMGFGAER) folds into the SUZ-C domain. T761 bears the Phosphothreonine mark.

Belongs to the UNR family. Component of a multi subunit autoregulatory ribonucleoprotein complex (ARC), at least composed of IGF2BP1, PABPC1 and CSDE1. Interacts with STRAP. Part of a complex associated with the FOS mCRD domain and consisting of PABPC1, PAIP1, HNRPD and SYNCRIP. The interaction with PABPC1 is direct and RNA-independent. Interacts with EIF4ENIF1/4E-T.

It is found in the cytoplasm. The protein localises to the stress granule. Its subcellular location is the P-body. Functionally, RNA-binding protein involved in translationally coupled mRNA turnover. Implicated with other RNA-binding proteins in the cytoplasmic deadenylation/translational and decay interplay of the FOS mRNA mediated by the major coding-region determinant of instability (mCRD) domain. Required for efficient formation of stress granules. (Microbial infection) Required for internal initiation of translation of human rhinovirus RNA. The protein is Cold shock domain-containing protein E1 of Homo sapiens (Human).